The chain runs to 360 residues: DNA polymerase IV (360 aa).

One can recognise a UmuC domain in the interval 9–191; it reads IMHLDIDAFY…LNINKIPYIG (183 aa). Mg(2+) is bound by residues Asp13 and Asp108. Residue Glu109 is part of the active site.

The protein belongs to the DNA polymerase type-Y family. As to quaternary structure, monomer. Mg(2+) is required as a cofactor.

Its subcellular location is the cytoplasm. The catalysed reaction is DNA(n) + a 2'-deoxyribonucleoside 5'-triphosphate = DNA(n+1) + diphosphate. In terms of biological role, poorly processive, error-prone DNA polymerase involved in untargeted mutagenesis. Copies undamaged DNA at stalled replication forks, which arise in vivo from mismatched or misaligned primer ends. These misaligned primers can be extended by PolIV. Exhibits no 3'-5' exonuclease (proofreading) activity. May be involved in translesional synthesis, in conjunction with the beta clamp from PolIII. This is DNA polymerase IV from Ureaplasma parvum serovar 3 (strain ATCC 27815 / 27 / NCTC 11736).